The sequence spans 330 residues: tRNA pseudouridine synthase B (330 aa).

The active-site Nucleophile is Asp-42.

Belongs to the pseudouridine synthase TruB family. Type 1 subfamily.

It carries out the reaction uridine(55) in tRNA = pseudouridine(55) in tRNA. In terms of biological role, responsible for synthesis of pseudouridine from uracil-55 in the psi GC loop of transfer RNAs. The sequence is that of tRNA pseudouridine synthase B from Lactococcus lactis subsp. cremoris (strain SK11).